A 439-amino-acid chain; its full sequence is Methylenetetrahydrofolate--tRNA-(uracil-5-)-methyltransferase TrmFO (439 aa).

Glycine 8–glycine 13 contacts FAD.

It belongs to the MnmG family. TrmFO subfamily. Requires FAD as cofactor.

It localises to the cytoplasm. It carries out the reaction uridine(54) in tRNA + (6R)-5,10-methylene-5,6,7,8-tetrahydrofolate + NADH + H(+) = 5-methyluridine(54) in tRNA + (6S)-5,6,7,8-tetrahydrofolate + NAD(+). It catalyses the reaction uridine(54) in tRNA + (6R)-5,10-methylene-5,6,7,8-tetrahydrofolate + NADPH + H(+) = 5-methyluridine(54) in tRNA + (6S)-5,6,7,8-tetrahydrofolate + NADP(+). Its function is as follows. Catalyzes the folate-dependent formation of 5-methyl-uridine at position 54 (M-5-U54) in all tRNAs. The protein is Methylenetetrahydrofolate--tRNA-(uracil-5-)-methyltransferase TrmFO of Dictyoglomus turgidum (strain DSM 6724 / Z-1310).